The sequence spans 389 residues: Mannitol-1-phosphate 5-dehydrogenase (389 aa).

5–16 (AVHFGAGNIGRG) is a binding site for NAD(+). Lys215 is an active-site residue.

The protein belongs to the mannitol dehydrogenase family. Monomer.

It carries out the reaction D-mannitol 1-phosphate + NAD(+) = beta-D-fructose 6-phosphate + NADH + H(+). Functionally, catalyzes the NAD(H)-dependent interconversion of D-fructose 6-phosphate and D-mannitol 1-phosphate in the mannitol metabolic pathway. This chain is Mannitol-1-phosphate 5-dehydrogenase, found in Sclerotinia sclerotiorum (strain ATCC 18683 / 1980 / Ss-1) (White mold).